Reading from the N-terminus, the 417-residue chain is Zinc-finger homeodomain protein 4 (417 aa).

Over residues 1 to 12 (MVSILQLQTRTE) the composition is skewed to polar residues. Disordered regions lie at residues 1–22 (MVSI…ASAA) and 31–50 (RQQQ…FQER). A compositionally biased stretch (low complexity) spans 13–22 (ASPASSASAA). Residues 36-46 (QEGEEEEEEFE) show a composition bias toward acidic residues. The ZF-HD dimerization-type; degenerate zinc-finger motif lies at 145–194 (YRECLKNHAAAIGGNATDGCGEFMPSGEEGSLEALKCSACGCHRNFHRKE). Disordered stretches follow at residues 281-309 (DEMD…FRTK) and 361-417 (NLAK…LKLE). The segment covering 286 to 298 (SGGGGGVGRGGGS) has biased composition (gly residues). A DNA-binding region (homeobox) is located at residues 303–366 (KKRFRTKFTA…NNKHNLAKKP (64 aa)). Residues 368–417 (PSSPPPPPQIPPMSMPPSPPPPQIPPMSMPPSPPPMPMPMPPSPPQLKLE) are compositionally biased toward pro residues.

As to quaternary structure, homo- and heterodimer with other ZFHD proteins.

It localises to the nucleus. Functionally, putative transcription factor. This is Zinc-finger homeodomain protein 4 (ZHD4) from Oryza sativa subsp. japonica (Rice).